Here is a 37-residue protein sequence, read N- to C-terminus: Large ribosomal subunit protein bL36c (37 aa).

It belongs to the bacterial ribosomal protein bL36 family.

It is found in the plastid. It localises to the chloroplast. The sequence is that of Large ribosomal subunit protein bL36c from Huperzia lucidula (Shining clubmoss).